Here is a 188-residue protein sequence, read N- to C-terminus: UPF0301 protein XAC2918 (188 aa).

This sequence belongs to the UPF0301 (AlgH) family.

This chain is UPF0301 protein XAC2918, found in Xanthomonas axonopodis pv. citri (strain 306).